We begin with the raw amino-acid sequence, 392 residues long: Putative F-box protein At1g71320 (392 aa).

The region spanning Asn-8–Leu-55 is the F-box domain.

This Arabidopsis thaliana (Mouse-ear cress) protein is Putative F-box protein At1g71320.